A 73-amino-acid polypeptide reads, in one-letter code: UPF0154 protein MG335.1 homolog (73 aa).

The helical transmembrane segment at Leu6–Ile26 threads the bilayer.

Belongs to the UPF0154 family.

It localises to the membrane. The chain is UPF0154 protein MG335.1 homolog from Mycoplasma pneumoniae (strain ATCC 29342 / M129 / Subtype 1) (Mycoplasmoides pneumoniae).